The following is a 309-amino-acid chain: Tagatose-6-phosphate kinase (309 aa).

The protein belongs to the carbohydrate kinase PfkB family. LacC subfamily.

It carries out the reaction D-tagatofuranose 6-phosphate + ATP = D-tagatofuranose 1,6-bisphosphate + ADP + H(+). Its pathway is carbohydrate metabolism; D-tagatose 6-phosphate degradation; D-glyceraldehyde 3-phosphate and glycerone phosphate from D-tagatose 6-phosphate: step 1/2. The polypeptide is Tagatose-6-phosphate kinase (Streptococcus pneumoniae (strain 70585)).